Consider the following 415-residue polypeptide: Phosphoglycerate kinase (415 aa).

Substrate contacts are provided by residues 27–29 (DIN), Arg44, 67–70 (HQGR), Arg124, and Arg164. ATP is bound by residues Glu336 and 362–365 (GGHM).

Belongs to the phosphoglycerate kinase family. In terms of assembly, monomer.

The protein localises to the cytoplasm. It carries out the reaction (2R)-3-phosphoglycerate + ATP = (2R)-3-phospho-glyceroyl phosphate + ADP. It participates in carbohydrate degradation; glycolysis; pyruvate from D-glyceraldehyde 3-phosphate: step 2/5. The protein is Phosphoglycerate kinase of Sulfurisphaera tokodaii (strain DSM 16993 / JCM 10545 / NBRC 100140 / 7) (Sulfolobus tokodaii).